An 874-amino-acid polypeptide reads, in one-letter code: Alanine--tRNA ligase (874 aa).

4 residues coordinate Zn(2+): H563, H567, C665, and H669.

Belongs to the class-II aminoacyl-tRNA synthetase family. Zn(2+) is required as a cofactor.

The protein localises to the cytoplasm. The catalysed reaction is tRNA(Ala) + L-alanine + ATP = L-alanyl-tRNA(Ala) + AMP + diphosphate. Catalyzes the attachment of alanine to tRNA(Ala) in a two-step reaction: alanine is first activated by ATP to form Ala-AMP and then transferred to the acceptor end of tRNA(Ala). Also edits incorrectly charged Ser-tRNA(Ala) and Gly-tRNA(Ala) via its editing domain. The chain is Alanine--tRNA ligase from Actinobacillus succinogenes (strain ATCC 55618 / DSM 22257 / CCUG 43843 / 130Z).